A 247-amino-acid polypeptide reads, in one-letter code: DNA-directed RNA polymerase subunit Rpo3 (247 aa).

This sequence belongs to the archaeal Rpo3/eukaryotic RPB3 RNA polymerase subunit family. Part of the RNA polymerase complex.

The protein localises to the cytoplasm. It catalyses the reaction RNA(n) + a ribonucleoside 5'-triphosphate = RNA(n+1) + diphosphate. Its function is as follows. DNA-dependent RNA polymerase (RNAP) catalyzes the transcription of DNA into RNA using the four ribonucleoside triphosphates as substrates. In Natronomonas pharaonis (strain ATCC 35678 / DSM 2160 / CIP 103997 / JCM 8858 / NBRC 14720 / NCIMB 2260 / Gabara) (Halobacterium pharaonis), this protein is DNA-directed RNA polymerase subunit Rpo3.